The following is a 305-amino-acid chain: Putative lipid kinase SAR0780 (305 aa).

The region spanning 3–139 (NKYTHGVLFY…YDVIKINNQY (137 aa)) is the DAGKc domain. ATP-binding positions include Ser-44, 74 to 80 (GDGTVNE), and Thr-101. Ser-220, Asp-223, and Glu-225 together coordinate Mg(2+). Catalysis depends on Glu-281, which acts as the Proton acceptor.

It belongs to the diacylglycerol/lipid kinase family. It depends on Mg(2+) as a cofactor.

In terms of biological role, may catalyze the ATP-dependent phosphorylation of lipids other than diacylglycerol (DAG). In fact, is not able to exhibit diacylglycerol kinase activity in vitro. This is Putative lipid kinase SAR0780 from Staphylococcus aureus (strain MRSA252).